The chain runs to 125 residues: Small ribosomal subunit protein uS13 (125 aa).

Residues 91 to 125 (HRRGLPARGQRTRTNARTRKGKRKTVAGKKKAGKK) are disordered.

Belongs to the universal ribosomal protein uS13 family. In terms of assembly, part of the 30S ribosomal subunit. Forms a loose heterodimer with protein S19. Forms two bridges to the 50S subunit in the 70S ribosome.

Located at the top of the head of the 30S subunit, it contacts several helices of the 16S rRNA. In the 70S ribosome it contacts the 23S rRNA (bridge B1a) and protein L5 of the 50S subunit (bridge B1b), connecting the 2 subunits; these bridges are implicated in subunit movement. Contacts the tRNAs in the A and P-sites. The chain is Small ribosomal subunit protein uS13 from Chloroherpeton thalassium (strain ATCC 35110 / GB-78).